The following is a 511-amino-acid chain: N-acetylgalactosamine-6-O-sulfatase (511 aa).

At serine 83 the chain carries 3-oxoalanine (Ser).

The protein belongs to the sulfatase family. In terms of processing, the conversion to 3-oxoalanine (also known as C-formylglycine, FGly), of a serine or cysteine residue in prokaryotes and of a cysteine residue in eukaryotes, is critical for catalytic activity.

In terms of biological role, exosulfatase involved in the degradation of the glycosaminoglycans (GAGs) chondroitin sulfate (CS) and dermatan sulfate (DS). Catalyzes the hydrolysis of the 6-sulfate groups of the N-acetyl-D-galactosamine 6-sulfate units. GAG-specific sulfatases play a key role in the persistence of the major human gut symbiont B.thetaiotaomicron in the host gastrointestinal tract. This Bacteroides thetaiotaomicron (strain ATCC 29148 / DSM 2079 / JCM 5827 / CCUG 10774 / NCTC 10582 / VPI-5482 / E50) protein is N-acetylgalactosamine-6-O-sulfatase.